The chain runs to 326 residues: Phenylalanine--tRNA ligase alpha subunit (326 aa).

Glu-251 lines the Mg(2+) pocket.

This sequence belongs to the class-II aminoacyl-tRNA synthetase family. Phe-tRNA synthetase alpha subunit type 1 subfamily. As to quaternary structure, tetramer of two alpha and two beta subunits. Mg(2+) serves as cofactor.

Its subcellular location is the cytoplasm. It carries out the reaction tRNA(Phe) + L-phenylalanine + ATP = L-phenylalanyl-tRNA(Phe) + AMP + diphosphate + H(+). The polypeptide is Phenylalanine--tRNA ligase alpha subunit (Pseudoalteromonas atlantica (strain T6c / ATCC BAA-1087)).